Consider the following 30-residue polypeptide: GVPVCGETCFGGTCNTPGCSCDPWPVCSRN.

A cross-link (cyclopeptide (Gly-Asn)) is located at residues 1–30; that stretch reads GVPVCGETCFGGTCNTPGCSCDPWPVCSRN. Cystine bridges form between Cys5–Cys19, Cys9–Cys21, and Cys14–Cys27.

Post-translationally, this is a cyclic peptide.

Functionally, probably participates in a plant defense mechanism. This is Varv peptide G from Viola arvensis (European field pansy).